Here is a 371-residue protein sequence, read N- to C-terminus: Anhydro-N-acetylmuramic acid kinase (371 aa).

15-22 (GTSLDGVD) is an ATP binding site.

It belongs to the anhydro-N-acetylmuramic acid kinase family.

It catalyses the reaction 1,6-anhydro-N-acetyl-beta-muramate + ATP + H2O = N-acetyl-D-muramate 6-phosphate + ADP + H(+). The protein operates within amino-sugar metabolism; 1,6-anhydro-N-acetylmuramate degradation. It functions in the pathway cell wall biogenesis; peptidoglycan recycling. Its function is as follows. Catalyzes the specific phosphorylation of 1,6-anhydro-N-acetylmuramic acid (anhMurNAc) with the simultaneous cleavage of the 1,6-anhydro ring, generating MurNAc-6-P. Is required for the utilization of anhMurNAc either imported from the medium or derived from its own cell wall murein, and thus plays a role in cell wall recycling. This is Anhydro-N-acetylmuramic acid kinase from Cereibacter sphaeroides (strain ATCC 17023 / DSM 158 / JCM 6121 / CCUG 31486 / LMG 2827 / NBRC 12203 / NCIMB 8253 / ATH 2.4.1.) (Rhodobacter sphaeroides).